Consider the following 467-residue polypeptide: FAD-dependent oxidoreductase dbaF (467 aa).

The signal sequence occupies residues 1–20; the sequence is MKSVLASGALTLAFSLAALA. Residues Asn96, Asn134, Asn337, Asn391, and Asn451 are each glycosylated (N-linked (GlcNAc...) asparagine).

Belongs to the beta-cyclopiazonate dehydrogenase family. Requires FAD as cofactor.

The protein operates within secondary metabolite biosynthesis. FAD-dependent oxidoreductase; part of the gene cluster that mediates the biosynthesis of the antibiotic 2,4-dihydroxy-3-methyl-6-(2-oxopropyl)benzaldehyde (DHMBA) and its derivatives. The direct non-reducing polyketide synthase dbaI product is 2,4-dihydroxy-3-methyl-6-(2-oxopropyl)benzaldehyde (DHMBA), produced by condensation of one acetyl-CoA starter unit with 4 malonyl-CoA units and one methylation step. The FAD-dependent monooxygenase dbaH is responsible for the synthesis of yellow pigments derived from the oxidation of DHMBA. The roles of dbaB, C, E and F have still to be determined. This chain is FAD-dependent oxidoreductase dbaF, found in Emericella nidulans (strain FGSC A4 / ATCC 38163 / CBS 112.46 / NRRL 194 / M139) (Aspergillus nidulans).